Reading from the N-terminus, the 322-residue chain is Ribonuclease Z (322 aa).

Zn(2+) contacts are provided by H62, H64, D66, H67, H143, D215, and H273. D66 acts as the Proton acceptor in catalysis. Basic and acidic residues predominate over residues 300-314 (ELRRYELDPREKEPD). A disordered region spans residues 300-322 (ELRRYELDPREKEPDPVGPADES).

This sequence belongs to the RNase Z family. Homodimer. Zn(2+) serves as cofactor.

It carries out the reaction Endonucleolytic cleavage of RNA, removing extra 3' nucleotides from tRNA precursor, generating 3' termini of tRNAs. A 3'-hydroxy group is left at the tRNA terminus and a 5'-phosphoryl group is left at the trailer molecule.. Its function is as follows. Zinc phosphodiesterase, which displays some tRNA 3'-processing endonuclease activity. Probably involved in tRNA maturation, by removing a 3'-trailer from precursor tRNA. This chain is Ribonuclease Z, found in Salinibacter ruber (strain DSM 13855 / M31).